The primary structure comprises 368 residues: MDNNNDFWKFSDQLRLESGLANLSLNDYSIWSNSYSSKRPDQRRNFDVKGSDFNNNNNSSKAFDDDFNDGWKITNSNGPLFSMPHNNNNNTLEVGGFNKGGGIYSNTNTTISSYHPNNLNNNAFGGFNKGIYSNTTSSPYLNNNHHHLDDNNNLNRNNLKGYKTYFKGEDQFHTPKSAKKKNTTNNTNNKKHGDNTNNNDGTKTGAEKKFKTLPPSESLPKNETIGGYIFVCNNDTMAENLQRQLFGLPPRYRDSVRTITPGLPIFLYNYSTHQLHGIFEAASFGGSNIDPTAWEDKKCPGESRFPAQVQVITRKVCEPLEEDSFRPILHHYDGPKFRLELSVPEALSLLDIFANQNSFDDIFKAIPA.

2 disordered regions span residues 35–61 and 171–218; these read YSSKRPDQRRNFDVKGSDFNNNNNSSK and QFHT…PSES. Positions 38–50 are enriched in basic and acidic residues; sequence KRPDQRRNFDVKG. Polar residues predominate over residues 52–61; the sequence is DFNNNNNSSK. The segment covering 195–204 has biased composition (low complexity); the sequence is NTNNNDGTKT. Residues 223–355 enclose the DCD domain; that stretch reads ETIGGYIFVC…ALSLLDIFAN (133 aa).

Its subcellular location is the cytoplasm. Involved in stress signaling pathway that mediates cell death in response to endoplasmic reticulum (ER) stress and osmotic stress. This is DCD domain-containing protein NRP-A from Glycine max (Soybean).